We begin with the raw amino-acid sequence, 125 residues long: MAQIPPSLQDLVNRFNQVQAQLQNVLLRKQQYEAELREIEKALTEIEKLPQDAKIYKSVGNFLIPQNRDAALQELRERKELLELHTKTLARQESLLREQIEKLREEINKELSRLKGSVETAKGGG.

The protein belongs to the prefoldin subunit beta family. In terms of assembly, heterohexamer of two alpha and four beta subunits.

It is found in the cytoplasm. Functionally, molecular chaperone capable of stabilizing a range of proteins. Seems to fulfill an ATP-independent, HSP70-like function in archaeal de novo protein folding. In Pyrobaculum islandicum (strain DSM 4184 / JCM 9189 / GEO3), this protein is Prefoldin subunit beta.